Reading from the N-terminus, the 426-residue chain is Serine--tRNA ligase (426 aa).

The tract at residues 103 to 129 is disordered; the sequence is VPNLPDDSVPTGKDENDNPEIRRWGTP. Over residues 114-125 the composition is skewed to basic and acidic residues; the sequence is GKDENDNPEIRR. 230-232 provides a ligand contact to L-serine; sequence TAE. 261–263 lines the ATP pocket; it reads RSE. Glutamate 284 lines the L-serine pocket. Residue 348–351 coordinates ATP; it reads EISS. Serine 384 contacts L-serine.

This sequence belongs to the class-II aminoacyl-tRNA synthetase family. Type-1 seryl-tRNA synthetase subfamily. In terms of assembly, homodimer. The tRNA molecule binds across the dimer.

The protein localises to the cytoplasm. The catalysed reaction is tRNA(Ser) + L-serine + ATP = L-seryl-tRNA(Ser) + AMP + diphosphate + H(+). It catalyses the reaction tRNA(Sec) + L-serine + ATP = L-seryl-tRNA(Sec) + AMP + diphosphate + H(+). It functions in the pathway aminoacyl-tRNA biosynthesis; selenocysteinyl-tRNA(Sec) biosynthesis; L-seryl-tRNA(Sec) from L-serine and tRNA(Sec): step 1/1. In terms of biological role, catalyzes the attachment of serine to tRNA(Ser). Is also able to aminoacylate tRNA(Sec) with serine, to form the misacylated tRNA L-seryl-tRNA(Sec), which will be further converted into selenocysteinyl-tRNA(Sec). The chain is Serine--tRNA ligase from Dichelobacter nodosus (strain VCS1703A).